The chain runs to 212 residues: Ribonuclease HII (212 aa).

The RNase H type-2 domain maps to 22–211 (GLVAGVDEVG…VADRILLQNT (190 aa)). Aspartate 28, glutamate 29, and aspartate 120 together coordinate a divalent metal cation.

This sequence belongs to the RNase HII family. Mn(2+) is required as a cofactor. Requires Mg(2+) as cofactor.

The protein localises to the cytoplasm. It catalyses the reaction Endonucleolytic cleavage to 5'-phosphomonoester.. Its function is as follows. Endonuclease that specifically degrades the RNA of RNA-DNA hybrids. This is Ribonuclease HII from Shewanella frigidimarina (strain NCIMB 400).